The chain runs to 250 residues: 5-oxoprolinase subunit A (250 aa).

The protein belongs to the LamB/PxpA family. As to quaternary structure, forms a complex composed of PxpA, PxpB and PxpC.

It carries out the reaction 5-oxo-L-proline + ATP + 2 H2O = L-glutamate + ADP + phosphate + H(+). Catalyzes the cleavage of 5-oxoproline to form L-glutamate coupled to the hydrolysis of ATP to ADP and inorganic phosphate. The sequence is that of 5-oxoprolinase subunit A from Staphylococcus aureus (strain Mu3 / ATCC 700698).